A 393-amino-acid chain; its full sequence is Dual-specificity RNA methyltransferase RlmN (393 aa).

Glutamate 115 (proton acceptor) is an active-site residue. Residues 121–365 (EEDRGTLCIS…APIRKTRGDD (245 aa)) enclose the Radical SAM core domain. Cysteine 128 and cysteine 370 form a disulfide bridge. [4Fe-4S] cluster is bound by residues cysteine 135, cysteine 139, and cysteine 142. Residues 194-195 (GE), serine 226, 248-250 (SFH), and asparagine 327 each bind S-adenosyl-L-methionine. The active-site S-methylcysteine intermediate is the cysteine 370.

This sequence belongs to the radical SAM superfamily. RlmN family. [4Fe-4S] cluster serves as cofactor.

The protein resides in the cytoplasm. The catalysed reaction is adenosine(2503) in 23S rRNA + 2 reduced [2Fe-2S]-[ferredoxin] + 2 S-adenosyl-L-methionine = 2-methyladenosine(2503) in 23S rRNA + 5'-deoxyadenosine + L-methionine + 2 oxidized [2Fe-2S]-[ferredoxin] + S-adenosyl-L-homocysteine. The enzyme catalyses adenosine(37) in tRNA + 2 reduced [2Fe-2S]-[ferredoxin] + 2 S-adenosyl-L-methionine = 2-methyladenosine(37) in tRNA + 5'-deoxyadenosine + L-methionine + 2 oxidized [2Fe-2S]-[ferredoxin] + S-adenosyl-L-homocysteine. Specifically methylates position 2 of adenine 2503 in 23S rRNA and position 2 of adenine 37 in tRNAs. m2A2503 modification seems to play a crucial role in the proofreading step occurring at the peptidyl transferase center and thus would serve to optimize ribosomal fidelity. This Ruegeria pomeroyi (strain ATCC 700808 / DSM 15171 / DSS-3) (Silicibacter pomeroyi) protein is Dual-specificity RNA methyltransferase RlmN.